The sequence spans 61 residues: MAKLSKMAQATRKLKFPVRQYNRCPLCGRPRAFLRKFQMCRICFRKRALQGEITGVIKSSW.

Cysteine 24, cysteine 27, cysteine 40, and cysteine 43 together coordinate Zn(2+).

It belongs to the universal ribosomal protein uS14 family. Zinc-binding uS14 subfamily. Part of the 30S ribosomal subunit. Contacts proteins S3 and S10. Requires Zn(2+) as cofactor.

Functionally, binds 16S rRNA, required for the assembly of 30S particles and may also be responsible for determining the conformation of the 16S rRNA at the A site. The protein is Small ribosomal subunit protein uS14 of Anaeromyxobacter dehalogenans (strain 2CP-1 / ATCC BAA-258).